Here is a 410-residue protein sequence, read N- to C-terminus: Peptidase T (410 aa).

His-79 serves as a coordination point for Zn(2+). Residue Asp-81 is part of the active site. Asp-142 is a Zn(2+) binding site. Catalysis depends on Glu-176, which acts as the Proton acceptor. Zn(2+) contacts are provided by Glu-177, Asp-199, and His-381.

The protein belongs to the peptidase M20B family. It depends on Zn(2+) as a cofactor.

The protein resides in the cytoplasm. The enzyme catalyses Release of the N-terminal residue from a tripeptide.. In terms of biological role, cleaves the N-terminal amino acid of tripeptides. The sequence is that of Peptidase T from Geobacillus sp. (strain WCH70).